A 471-amino-acid polypeptide reads, in one-letter code: Putative multidrug resistance protein MdtD (471 aa).

At 1 to 11 (MTDLPDNTRWQ) the chain is on the periplasmic side. Residues 12–32 (LWIVAFGFFMQSLDTTIVNTA) form a helical membrane-spanning segment. Topologically, residues 33–48 (LPSMAQSLGESPLHMH) are cytoplasmic. The helical transmembrane segment at 49–69 (MVIVSYVLTVAVMLPASGWLA) threads the bilayer. At 70 to 76 (DKVGVRN) the chain is on the periplasmic side. A helical transmembrane segment spans residues 77–97 (IFFTAIVLFTLGSLFCALSGT). Topologically, residues 98–101 (LNEL) are cytoplasmic. Residues 102 to 124 (LLARALQGVGGAMMVPVGRLTVM) traverse the membrane as a helical segment. At 125–137 (KIVPREQYMAAMT) the chain is on the periplasmic side. Residues 138-158 (FVTLPGQVGPLLGPALGGLLV) traverse the membrane as a helical segment. Over 159 to 164 (EYASWH) the chain is Cytoplasmic. Residues 165–185 (WIFLINIPVGIIGAIATLMLM) form a helical membrane-spanning segment. Residues 186-196 (PNYTMQTRRFD) lie on the Periplasmic side of the membrane. The helical transmembrane segment at 197 to 217 (LSGFLLLAIGMAVLTLALDGS) threads the bilayer. At 218–224 (KGTGLSP) the chain is on the cytoplasmic side. A helical transmembrane segment spans residues 225–245 (LAITGLVAVGVVALVLYLLHA). Residues 246-262 (RNNNRALFSLKLFRTRT) are Periplasmic-facing. Residues 263–283 (FSLGLAGSFAGRIGSGMLPFM) form a helical membrane-spanning segment. The Cytoplasmic portion of the chain corresponds to 284–285 (TP). Residues 286–306 (VFLQIGLGFSPFHAGLMMIPM) traverse the membrane as a helical segment. The Periplasmic segment spans residues 307 to 341 (VLGSMGMKRIVVQVVNRFGYRRVLVATTLGLSLVT). The helical transmembrane segment at 342 to 362 (LLFMTTALLGWYYVLPFVLFL) threads the bilayer. Residues 363–395 (QGMVNSTRFSSMNTLTLKDLPDNLASSGNSLLS) lie on the Cytoplasmic side of the membrane. The chain crosses the membrane as a helical span at residues 396–416 (MIMQLSMSIGVTIAGLLLGLF). The Periplasmic segment spans residues 417 to 430 (GSQHVSVDSGTTQT). Residues 431-451 (VFMYTWLSMAFIIALPAFIFA) form a helical membrane-spanning segment. Residues 452–471 (RVPNDTHQNVAISRRKRSAQ) lie on the Cytoplasmic side of the membrane.

Belongs to the major facilitator superfamily. TCR/Tet family.

The protein resides in the cell inner membrane. The protein is Putative multidrug resistance protein MdtD of Escherichia coli O17:K52:H18 (strain UMN026 / ExPEC).